The sequence spans 138 residues: Transcription antitermination protein NusB (138 aa).

The protein belongs to the NusB family.

Its function is as follows. Involved in transcription antitermination. Required for transcription of ribosomal RNA (rRNA) genes. Binds specifically to the boxA antiterminator sequence of the ribosomal RNA (rrn) operons. The sequence is that of Transcription antitermination protein NusB from Limosilactobacillus reuteri (strain DSM 20016) (Lactobacillus reuteri).